The sequence spans 842 residues: MLHFLFHSGSSSNRNSSPKESYELLHGLDKQYQSTKDVTFRLVLVQDIGDRKKTVLFDSNHVDGQKGDSVLRDSANAPLTDLMFGAIPISHKGTTTKLHILHPPNPATRSYMLTQLFQINTHGTVVNSSHETIASATSLFENSSSNFSEDPNKPNSSDAFESNKEDSPLLKSFNDSAIPENAANLSSSSKNMKDSTLSSQKARSNTSSSFLTPLHEQLESRCALHTAAKDPFRSKNSLRCNRGHSPLSSQQILPAISNNTSEKPDSNNCGFLLPSNSTSIKDLKNVKKGNRLNSPPFITIPQSIKNTNSNFLLSSPSLFSDTRTRPASYALALIITVPYEYDEIVHPVSTYYTMLSNFTLSLQKEIDERIRNLLFVSLSSGGDNKNDTGIPLIQSSSSKVGFGPYALSKDLITAKSFHKCILLLKTGFSAPLIKPSVFSGSKWVENMRLLTDLCKSPAQKCLFSNLLTATRKFCLERQKDDVTFKVLLQSSKAPIARRFLYLLAPLMRPSIAQCSDTLLNPIQLYPNSGILSSSSLSTSFGCPSVSGSLRVPSYDMKINDSCKAIDIHSEKPSFADSPRKTSLRNYLSSSWRLKFMRSSYQNNETDPLNPTSGSFLRQPMQYSSPSGVSESAASSFLDIENIDEYLESAENMKYLPRSTVGPGGMLHVDLLETNAKQESEATTSTVPPSPSQVGFLKALHPSFDLQAAPPNSYVSFSDDDFISATLLYMLEDVSRNKSQLLAEKKHLKSQLMVANLDTYSLDCYEIHEFPSEWENDYAPFLLKEHHKVIGETYVSSFDIQQGCFNVIKRRLSSYKWDKSDDSFVSEVLKGDLKEVLRVCSHC.

Disordered stretches follow at residues 1–20 (MLHF…SPKE) and 142–209 (NSSS…TSSS). One can recognise a uDENN FNIP1/2-type domain in the interval 35 to 422 (TKDVTFRLVL…TAKSFHKCIL (388 aa)). Polar residues predominate over residues 183–209 (ANLSSSSKNMKDSTLSSQKARSNTSSS). The 343-residue stretch at 430-772 (APLIKPSVFS…CYEIHEFPSE (343 aa)) folds into the cDENN FNIP1/2-type domain. A phosphoserine mark is found at Ser-573 and Ser-590. In terms of domain architecture, dDENN FNIP1/2-type spans 777 to 842 (YAPFLLKEHH…KEVLRVCSHC (66 aa)).

The protein localises to the cytoplasm. This is an uncharacterized protein from Schizosaccharomyces pombe (strain 972 / ATCC 24843) (Fission yeast).